A 520-amino-acid chain; its full sequence is Sensory neuron membrane protein 2 (520 aa).

Topologically, residues 1 to 7 (MLGKHSK) are cytoplasmic. Residues 8 to 28 (IFFGVSLIFLVIAIVLASWGF) form a helical membrane-spanning segment. The Extracellular portion of the chain corresponds to 29 to 468 (QKIVNKQIQK…DSHKLLGYVE (440 aa)). N-linked (GlcNAc...) asparagine glycosylation is found at Asn44, Asn67, Asn104, Asn228, Asn271, Asn313, and Asn342. Intrachain disulfides connect Cys267/Cys337, Cys298/Cys361, and Cys339/Cys350. A helical membrane pass occupies residues 469–489 (VAKWFLLTIAIISVIASAVAV). Residues 490–520 (ARANALLSWPRNSNSVSFILGPSVTQVNKGN) are Cytoplasmic-facing.

The protein belongs to the CD36 family. As to expression, localizes to cells surrounding the sensory neurons in the antenna. Associate in a ratio of 2:1 with the neurons expressing the other subtype SNMP1.

It localises to the cell membrane. Its function is as follows. Plays an olfactory role that is not restricted to pheromone sensitivity. May play a role in the elimination of lipophilic components from the sensillum lymph. The protein is Sensory neuron membrane protein 2 of Heliothis virescens (Tobacco budworm moth).